The sequence spans 323 residues: Serine/threonine-protein kinase-transforming protein raf (323 aa).

The Protein kinase domain maps to 24–284; the sequence is VMLSTRIGSG…PQILSSIELL (261 aa). ATP is bound by residues 30–38 and Lys50; that span reads IGSGSFGTV. Asp143 serves as the catalytic Proton acceptor.

Belongs to the protein kinase superfamily. TKL Ser/Thr protein kinase family. RAF subfamily.

The enzyme catalyses L-seryl-[protein] + ATP = O-phospho-L-seryl-[protein] + ADP + H(+). It catalyses the reaction L-threonyl-[protein] + ATP = O-phospho-L-threonyl-[protein] + ADP + H(+). The polypeptide is Serine/threonine-protein kinase-transforming protein raf (V-RAF) (Murine sarcoma virus 3611).